The following is a 418-amino-acid chain: Queuine tRNA-ribosyltransferase accessory subunit 2 (418 aa).

4 residues coordinate Zn(2+): Cys325, Cys327, Cys330, and His356.

The protein belongs to the queuine tRNA-ribosyltransferase family. QTRT2 subfamily. As to quaternary structure, heterodimer of a catalytic subunit and an accessory subunit. Requires Zn(2+) as cofactor.

The protein resides in the cytoplasm. Non-catalytic subunit of the queuine tRNA-ribosyltransferase (TGT) that catalyzes the base-exchange of a guanine (G) residue with queuine (Q) at position 34 (anticodon wobble position) in tRNAs with GU(N) anticodons (tRNA-Asp, -Asn, -His and -Tyr), resulting in the hypermodified nucleoside queuosine (7-(((4,5-cis-dihydroxy-2-cyclopenten-1-yl)amino)methyl)-7-deazaguanosine). The polypeptide is Queuine tRNA-ribosyltransferase accessory subunit 2 (Drosophila yakuba (Fruit fly)).